A 496-amino-acid chain; its full sequence is MQRDCTMDYKESCPSVSIPSSDEHREKKKRFTVYKVLVSVGRSEWFVFRRYAEFDKLYNSLKKQFPAMALKIPAKRIFGDNFDPDFIKQRRAGLNEFIQNLVRYPELYNHPDVRAFLQMDSPRHQSDPSEDEDERSTPKPHSTSRNINLGPTGNPHAKPSDFDFLKVIGKGSFGKVLLAKRKLDGKFYAVKVLQKKIVLNRKEQKHIMAERNVLLKNVKHPFLVGLHYSFQTTEKLYFVLDFVNGGELFFHLQRERSFPEPRARFYAAEIASALGYLHSIKIVYRDLKPENILLDSMGHVVLTDFGLCKEGIAISDTTTTFCGTPEYLAPEVIRKQPYDRTVDWWCLGAVLYEMLYGLPPFYCRDVAEMYDNILHKPLNLRPGVSLTAWSILEELLEKNRQNRLGAKEDFLEIQNHPFFESLSWTDLVQKKIPPPFNPNVAGPDDIRNFDAVFTEETVPYSVCVSSDYSIVNASVLEADDAFVGFSYAPPSEDLFL.

Residues 12 to 124 (SCPSVSIPSS…AFLQMDSPRH (113 aa)) form the PX domain. The tract at residues 121–157 (SPRHQSDPSEDEDERSTPKPHSTSRNINLGPTGNPHA) is disordered. Residues Ser-126 and Ser-129 each carry the phosphoserine modification. The span at 139 to 151 (KPHSTSRNINLGP) shows a compositional bias: polar residues. Positions 162-464 (FDFLKVIGKG…EETVPYSVCV (303 aa)) constitute a Protein kinase domain. Residues 168–176 (IGKGSFGKV) and Lys-191 contribute to the ATP site. The short motif at 195–205 (KKIVLNRKEQK) is the Nuclear localization signal element. Residue Asp-286 is the Proton acceptor of the active site. Position 320 is a phosphothreonine; by PDPK1 (Thr-320). Residues 420-496 (ESLSWTDLVQ…YAPPSEDLFL (77 aa)) form the AGC-kinase C-terminal domain. Position 486 is a phosphoserine (Ser-486).

This sequence belongs to the protein kinase superfamily. AGC Ser/Thr protein kinase family. In terms of assembly, interacts with GSK3B and FLII. Interacts with PDPK1 in a phosphorylation-dependent manner. Post-translationally, activated by phosphorylation on Ser-486 by an unknown kinase (may be mTORC2 but not confirmed), transforming it into a substrate for PDPK1 which then phosphorylates it on Thr-320.

It localises to the cytoplasmic vesicle. Its subcellular location is the early endosome. The protein localises to the recycling endosome. The enzyme catalyses L-seryl-[protein] + ATP = O-phospho-L-seryl-[protein] + ADP + H(+). It catalyses the reaction L-threonyl-[protein] + ATP = O-phospho-L-threonyl-[protein] + ADP + H(+). With respect to regulation, two specific sites, one in the kinase domain (Thr-320) and the other in the C-terminal regulatory region (Ser-486), need to be phosphorylated for its full activation. Its function is as follows. Serine/threonine-protein kinase which is involved in the regulation of a wide variety of ion channels, membrane transporters, cell growth, proliferation, survival and migration. Up-regulates Na(+) channels: SCNN1A/ENAC and SCN5A, K(+) channels: KCNA3/KV1.3, KCNE1, KCNQ1 and KCNH2/HERG, epithelial Ca(2+) channels: TRPV5 and TRPV6, chloride channel: BSND, creatine transporter: SLC6A8, Na(+)/dicarboxylate cotransporter: SLC13A2/NADC1, Na(+)-dependent phosphate cotransporter: SLC34A2/NAPI-2B, amino acid transporters: SLC1A5/ASCT2 and SLC6A19, glutamate transporters: SLC1A3/EAAT1, SLC1A6/EAAT4 and SLC1A7/EAAT5, glutamate receptors: GRIA1/GLUR1 and GRIK2/GLUR6, Na(+)/H(+) exchanger: SLC9A3/NHE3, and the Na(+)/K(+) ATPase. Plays a role in the regulation of renal tubular phosphate transport and bone density. Phosphorylates NEDD4L and GSK3B. Positively regulates ER transcription activity through phosphorylation of FLII. Negatively regulates the function of ITCH/AIP4 via its phosphorylation and thereby prevents CXCR4 from being efficiently sorted to lysosomes. The polypeptide is Serine/threonine-protein kinase Sgk3 (Sgk3) (Rattus norvegicus (Rat)).